The following is a 187-amino-acid chain: Large ribosomal subunit protein uL22A (187 aa).

The protein belongs to the universal ribosomal protein uL22 family. Component of the large ribosomal subunit (LSU). Mature yeast ribosomes consist of a small (40S) and a large (60S) subunit. The 40S small subunit contains 1 molecule of ribosomal RNA (18S rRNA) and at least 33 different proteins. The large 60S subunit contains 3 rRNA molecules (25S, 5.8S and 5S rRNA) and at least 46 different proteins. uL22 is associated with the polypeptide exit tunnel.

It localises to the cytoplasm. In terms of biological role, component of the ribosome, a large ribonucleoprotein complex responsible for the synthesis of proteins in the cell. The small ribosomal subunit (SSU) binds messenger RNAs (mRNAs) and translates the encoded message by selecting cognate aminoacyl-transfer RNA (tRNA) molecules. The large subunit (LSU) contains the ribosomal catalytic site termed the peptidyl transferase center (PTC), which catalyzes the formation of peptide bonds, thereby polymerizing the amino acids delivered by tRNAs into a polypeptide chain. The nascent polypeptides leave the ribosome through a tunnel in the LSU and interact with protein factors that function in enzymatic processing, targeting, and the membrane insertion of nascent chains at the exit of the ribosomal tunnel. The polypeptide is Large ribosomal subunit protein uL22A (rpl1701) (Schizosaccharomyces pombe (strain 972 / ATCC 24843) (Fission yeast)).